A 351-amino-acid chain; its full sequence is Ion-translocating oxidoreductase complex subunit D (351 aa).

4 consecutive transmembrane segments (helical) span residues 20–40 (IMLLVILACLPGMLAQVYFFG), 44–64 (LIQVGLASATALIAEGVTLSL), 89–109 (LPPLAPWWMVVMATVFAIIIA), and 123–143 (PAMIGYVVLLISFPVQMTSWL). Thr-187 is modified (FMN phosphoryl threonine). Transmembrane regions (helical) follow at residues 215–235 (LSGIGWQWVNIGFLIGGLFLL), 244–264 (IPVSFLLSLMFCASLSWVIAP), 267–287 (FAPPMLHLLSGATMLGAFFIA), 301–321 (LIFGALIGLLVWLIRTYGGYP), and 322–342 (DGVAFAVLLANITVPLIDYYT).

This sequence belongs to the NqrB/RnfD family. The complex is composed of six subunits: RnfA, RnfB, RnfC, RnfD, RnfE and RnfG. FMN serves as cofactor.

It is found in the cell inner membrane. Part of a membrane-bound complex that couples electron transfer with translocation of ions across the membrane. The chain is Ion-translocating oxidoreductase complex subunit D from Pectobacterium carotovorum subsp. carotovorum (strain PC1).